The sequence spans 396 residues: Tryptophan synthase beta chain (396 aa).

Lys86 bears the N6-(pyridoxal phosphate)lysine mark.

This sequence belongs to the TrpB family. In terms of assembly, tetramer of two alpha and two beta chains. Pyridoxal 5'-phosphate serves as cofactor.

It catalyses the reaction (1S,2R)-1-C-(indol-3-yl)glycerol 3-phosphate + L-serine = D-glyceraldehyde 3-phosphate + L-tryptophan + H2O. Its pathway is amino-acid biosynthesis; L-tryptophan biosynthesis; L-tryptophan from chorismate: step 5/5. The beta subunit is responsible for the synthesis of L-tryptophan from indole and L-serine. This chain is Tryptophan synthase beta chain, found in Serratia proteamaculans (strain 568).